Here is a 115-residue protein sequence, read N- to C-terminus: NADH-ubiquinone oxidoreductase chain 3 (115 aa).

Methionine 1 carries the post-translational modification N-formylmethionine. A run of 3 helical transmembrane segments spans residues 3-23 (LMLA…IAFW), 55-75 (FFLV…LLPL), and 84-104 (LNTM…SLAY).

As to quaternary structure, core subunit of respiratory chain NADH dehydrogenase (Complex I) which is composed of 45 different subunits. Interacts with TMEM186. Interacts with TMEM242.

The protein localises to the mitochondrion inner membrane. The enzyme catalyses a ubiquinone + NADH + 5 H(+)(in) = a ubiquinol + NAD(+) + 4 H(+)(out). In terms of biological role, core subunit of the mitochondrial membrane respiratory chain NADH dehydrogenase (Complex I) which catalyzes electron transfer from NADH through the respiratory chain, using ubiquinone as an electron acceptor. Essential for the catalytic activity of complex I. In Bos taurus (Bovine), this protein is NADH-ubiquinone oxidoreductase chain 3.